The following is a 170-amino-acid chain: Adenine phosphoribosyltransferase (170 aa).

This sequence belongs to the purine/pyrimidine phosphoribosyltransferase family. As to quaternary structure, homodimer.

It is found in the cytoplasm. The catalysed reaction is AMP + diphosphate = 5-phospho-alpha-D-ribose 1-diphosphate + adenine. The protein operates within purine metabolism; AMP biosynthesis via salvage pathway; AMP from adenine: step 1/1. In terms of biological role, catalyzes a salvage reaction resulting in the formation of AMP, that is energically less costly than de novo synthesis. The protein is Adenine phosphoribosyltransferase of Oceanobacillus iheyensis (strain DSM 14371 / CIP 107618 / JCM 11309 / KCTC 3954 / HTE831).